We begin with the raw amino-acid sequence, 314 residues long: Probable 2-(5''-triphosphoribosyl)-3'-dephosphocoenzyme-A synthase (314 aa).

The protein belongs to the CitG/MdcB family.

It catalyses the reaction 3'-dephospho-CoA + ATP = 2'-(5''-triphospho-alpha-D-ribosyl)-3'-dephospho-CoA + adenine. This is Probable 2-(5''-triphosphoribosyl)-3'-dephosphocoenzyme-A synthase from Photobacterium profundum (strain SS9).